Consider the following 386-residue polypeptide: tRNA N6-adenosine threonylcarbamoyltransferase (386 aa).

A divalent metal cation contacts are provided by His-141, His-145, and Tyr-162. Residues 162–166 (YVSGG), Asp-194, Gly-209, Glu-213, and Asn-315 contribute to the substrate site. Asp-344 is an a divalent metal cation binding site.

The protein belongs to the KAE1 / TsaD family. Component of the EKC/KEOPS complex composed of at least BUD32, CGI121, GON7, KAE1 and PCC1; the whole complex dimerizes. A divalent metal cation is required as a cofactor.

It is found in the cytoplasm. The protein resides in the nucleus. The enzyme catalyses L-threonylcarbamoyladenylate + adenosine(37) in tRNA = N(6)-L-threonylcarbamoyladenosine(37) in tRNA + AMP + H(+). Component of the EKC/KEOPS complex that is required for the formation of a threonylcarbamoyl group on adenosine at position 37 (t(6)A37) in tRNAs that read codons beginning with adenine. The complex is probably involved in the transfer of the threonylcarbamoyl moiety of threonylcarbamoyl-AMP (TC-AMP) to the N6 group of A37. KAE1 likely plays a direct catalytic role in this reaction, but requires other protein(s) of the complex to fulfill this activity. The EKC/KEOPS complex also promotes both telomere uncapping and telomere elongation. The complex is required for efficient recruitment of transcriptional coactivators. This chain is tRNA N6-adenosine threonylcarbamoyltransferase, found in Saccharomyces cerevisiae (strain ATCC 204508 / S288c) (Baker's yeast).